Consider the following 250-residue polypeptide: Triosephosphate isomerase (250 aa).

Substrate is bound at residue 9 to 11 (NWK). The active-site Electrophile is the H94. E166 serves as the catalytic Proton acceptor. Residues G172, S212, and 233 to 234 (GG) each bind substrate.

It belongs to the triosephosphate isomerase family. In terms of assembly, homodimer.

It is found in the cytoplasm. It carries out the reaction D-glyceraldehyde 3-phosphate = dihydroxyacetone phosphate. The protein operates within carbohydrate biosynthesis; gluconeogenesis. It participates in carbohydrate degradation; glycolysis; D-glyceraldehyde 3-phosphate from glycerone phosphate: step 1/1. Involved in the gluconeogenesis. Catalyzes stereospecifically the conversion of dihydroxyacetone phosphate (DHAP) to D-glyceraldehyde-3-phosphate (G3P). This chain is Triosephosphate isomerase, found in Clostridium novyi (strain NT).